The following is a 146-amino-acid chain: Nitric oxide reductase subunit C (146 aa).

Residues 13 to 29 (IYFGGSVFFFLVFLGLT) form a helical; Signal-anchor membrane-spanning segment. Heme c contacts are provided by C61, C64, and H65.

In terms of assembly, heterodimer of cytochromes b (large subunit) and c (small subunit).

Its subcellular location is the cell membrane. In terms of biological role, component of the anaerobic respiratory chain that transforms nitrate to dinitrogen (denitrification). This is Nitric oxide reductase subunit C (norC) from Stutzerimonas stutzeri (Pseudomonas stutzeri).